Consider the following 486-residue polypeptide: Protein nucleotidyltransferase YdiU (486 aa).

The ATP site is built by glycine 90, glycine 92, arginine 93, lysine 113, aspartate 125, glycine 126, arginine 176, and arginine 183. Aspartate 252 functions as the Proton acceptor in the catalytic mechanism. The Mg(2+) site is built by asparagine 253 and aspartate 262. Aspartate 262 lines the ATP pocket.

The protein belongs to the SELO family. Mg(2+) is required as a cofactor. Mn(2+) serves as cofactor.

The enzyme catalyses L-seryl-[protein] + ATP = 3-O-(5'-adenylyl)-L-seryl-[protein] + diphosphate. The catalysed reaction is L-threonyl-[protein] + ATP = 3-O-(5'-adenylyl)-L-threonyl-[protein] + diphosphate. It carries out the reaction L-tyrosyl-[protein] + ATP = O-(5'-adenylyl)-L-tyrosyl-[protein] + diphosphate. It catalyses the reaction L-histidyl-[protein] + UTP = N(tele)-(5'-uridylyl)-L-histidyl-[protein] + diphosphate. The enzyme catalyses L-seryl-[protein] + UTP = O-(5'-uridylyl)-L-seryl-[protein] + diphosphate. The catalysed reaction is L-tyrosyl-[protein] + UTP = O-(5'-uridylyl)-L-tyrosyl-[protein] + diphosphate. Functionally, nucleotidyltransferase involved in the post-translational modification of proteins. It can catalyze the addition of adenosine monophosphate (AMP) or uridine monophosphate (UMP) to a protein, resulting in modifications known as AMPylation and UMPylation. The chain is Protein nucleotidyltransferase YdiU from Pseudomonas putida (strain ATCC 47054 / DSM 6125 / CFBP 8728 / NCIMB 11950 / KT2440).